We begin with the raw amino-acid sequence, 237 residues long: Uracil-DNA glycosylase (237 aa).

Catalysis depends on Asp-77, which acts as the Proton acceptor.

Belongs to the uracil-DNA glycosylase (UDG) superfamily. UNG family.

It localises to the cytoplasm. The catalysed reaction is Hydrolyzes single-stranded DNA or mismatched double-stranded DNA and polynucleotides, releasing free uracil.. Excises uracil residues from the DNA which can arise as a result of misincorporation of dUMP residues by DNA polymerase or due to deamination of cytosine. The protein is Uracil-DNA glycosylase of Acinetobacter baumannii (strain ACICU).